The following is a 220-amino-acid chain: Protein DGCR6L (220 aa).

Residues 76–159 (KSLYNQRLRL…ADQQSTLEKA (84 aa)) are a coiled coil.

It belongs to the gonadal family. Widely expressed in fetal and adult tissues. Highest expression in liver, heart and skeletal muscle. Lower levels in pancreas and placenta. Weak expression in brain.

Its subcellular location is the nucleus. In terms of biological role, may play a role in neural crest cell migration into the third and fourth pharyngeal pouches. The protein is Protein DGCR6L (DGCR6L) of Homo sapiens (Human).